A 208-amino-acid chain; its full sequence is Imidazole glycerol phosphate synthase subunit HisH (208 aa).

The Glutamine amidotransferase type-1 domain occupies 1–206 (MIVIVDYDTG…KEMTEDEALS (206 aa)). Residue Cys-79 is the Nucleophile of the active site. Residues His-181 and Glu-183 contribute to the active site.

Heterodimer of HisH and HisF.

It is found in the cytoplasm. It carries out the reaction 5-[(5-phospho-1-deoxy-D-ribulos-1-ylimino)methylamino]-1-(5-phospho-beta-D-ribosyl)imidazole-4-carboxamide + L-glutamine = D-erythro-1-(imidazol-4-yl)glycerol 3-phosphate + 5-amino-1-(5-phospho-beta-D-ribosyl)imidazole-4-carboxamide + L-glutamate + H(+). The enzyme catalyses L-glutamine + H2O = L-glutamate + NH4(+). It participates in amino-acid biosynthesis; L-histidine biosynthesis; L-histidine from 5-phospho-alpha-D-ribose 1-diphosphate: step 5/9. Functionally, IGPS catalyzes the conversion of PRFAR and glutamine to IGP, AICAR and glutamate. The HisH subunit catalyzes the hydrolysis of glutamine to glutamate and ammonia as part of the synthesis of IGP and AICAR. The resulting ammonia molecule is channeled to the active site of HisF. The sequence is that of Imidazole glycerol phosphate synthase subunit HisH from Lacticaseibacillus casei (strain BL23) (Lactobacillus casei).